Consider the following 567-residue polypeptide: Type II secretion system protein E (567 aa).

325-332 (GPTGSGKT) contacts ATP.

It belongs to the GSP E family. Forms homooligomers; most probably hexamers. Interacts with XpsL/GspL.

Its subcellular location is the cell inner membrane. The enzyme catalyses ATP + H2O + cellular proteinSide 1 = ADP + phosphate + cellular proteinSide 2.. ATPase component of the type II secretion system required for the energy-dependent secretion of extracellular factors such as proteases and toxins from the periplasm. Acts as a molecular motor to provide the energy that is required for assembly of the pseudopilus and the extrusion of substrates generated in the cytoplasm. In Xanthomonas campestris pv. campestris (strain ATCC 33913 / DSM 3586 / NCPPB 528 / LMG 568 / P 25), this protein is Type II secretion system protein E (xpsE).